The chain runs to 378 residues: Leukocyte elastase inhibitor (378 aa).

Residue methionine 1 is modified to N-acetylmethionine. Lysine 137 bears the N6-acetyllysine mark. Residue serine 299 is modified to Phosphoserine. Positions 350–378 (DFIADHPFIFFIRHNPSSNILFLGRLSSP) are CARD-binding motif (CBM).

Belongs to the serpin family. Ov-serpin subfamily. As to quaternary structure, monomer. Interacts (via C-terminus) with CASP1; CASP4 (via CARD domain) and CASP5; these interactions regulate the activity of inflammatory caspases. Interacts with PRTN3. Interacts with GZMH.

The protein resides in the secreted. It is found in the cytoplasm. The protein localises to the cytolytic granule. Its subcellular location is the early endosome. Its function is as follows. Neutrophil serine protease inhibitor that plays an essential role in the regulation of the innate immune response, inflammation and cellular homeostasis. Acts primarily to protect the cell from proteases released in the cytoplasm during stress or infection. These proteases are important in killing microbes but when released from granules, these potent enzymes also destroy host proteins and contribute to mortality. Regulates the activity of the neutrophil proteases elastase, cathepsin G, proteinase-3, chymase, chymotrypsin, and kallikrein-3. Also acts as a potent intracellular inhibitor of GZMH by directly blocking its proteolytic activity. During inflammation, limits the activity of inflammatory caspases CASP1, CASP4 and CASP5 by suppressing their caspase-recruitment domain (CARD) oligomerization and enzymatic activation. When secreted, promotes the proliferation of beta-cells via its protease inhibitory function. Functionally, may be cleaved leading to a loss of its anti-protease activity and to the appearance of an endonuclease activity. However no catalytic site was identified. The polypeptide is Leukocyte elastase inhibitor (SERPINB1) (Sus scrofa (Pig)).